Reading from the N-terminus, the 156-residue chain is MPRRREVPKRDVLPDPKFGSVELSKFMNVVMIDGKKAVAERIVYGALAQVEKKTGKNPIEVFSTAIANAKPVVEVKSRRVGGANYQVPVEVRPARRLALAMRWLREAARKRGEKSMDLRLAGELLDAAEGRGGAMKKRDEVHRMAEANKAFSHFRF.

This sequence belongs to the universal ribosomal protein uS7 family. Part of the 30S ribosomal subunit. Contacts proteins S9 and S11.

Its function is as follows. One of the primary rRNA binding proteins, it binds directly to 16S rRNA where it nucleates assembly of the head domain of the 30S subunit. Is located at the subunit interface close to the decoding center, probably blocks exit of the E-site tRNA. In Laribacter hongkongensis (strain HLHK9), this protein is Small ribosomal subunit protein uS7.